Here is a 1120-residue protein sequence, read N- to C-terminus: Probable leucine-rich repeat receptor-like protein kinase At1g35710 (1120 aa).

The signal sequence occupies residues 1-29 (MGFAEKNLYDFRFLLFISIILSCSISASA). Over 30 to 783 (TIAEANALLK…RELKKPKKNG (754 aa)) the chain is Extracellular. N-linked (GlcNAc...) asparagine glycans are attached at residues asparagine 46, asparagine 60, asparagine 83, and asparagine 124. LRR repeat units follow at residues 78–100 (SIEE…PFIS), 103–125 (NLAY…FGNL), 127–150 (KLIY…GNLK), 151–172 (NLTV…ELGN), 175–198 (SMTD…GNLK), 199–221 (NLMV…LGNM), 223–246 (SMTD…GNLK), 247–269 (NLMV…IGNM), 271–294 (SMTN…GNLK), 295–317 (NLTL…LGNI), 319–342 (SMID…GNLK), 343–365 (NLTI…LGNM), 367–389 (SMID…FGNL), 391–412 (NLTY…ELGN), 415–437 (SMIN…FGNF), 439–461 (KLES…VANS), 463–484 (HLTT…TVCK), 487–510 (KLQN…RDCK), 535–557 (DLNF…WEKS), 559–581 (KLGA…IWNM), 583–605 (QLVE…IGNL), 607–630 (NLSR…SFLT), 631–652 (NLES…TFDS), 655–677 (KLHD…SKLT), 678–701 (QLTQ…SSLQ), 702–723 (SLDK…TFEG), and 726–748 (ALTN…PTFR). N-linked (GlcNAc...) asparagine glycosylation occurs at asparagine 151. The N-linked (GlcNAc...) asparagine glycan is linked to asparagine 295. Asparagine 343 is a glycosylation site (N-linked (GlcNAc...) asparagine). Residues asparagine 391, asparagine 436, asparagine 460, asparagine 473, and asparagine 490 are each glycosylated (N-linked (GlcNAc...) asparagine). 6 N-linked (GlcNAc...) asparagine glycosylation sites follow: asparagine 569, asparagine 580, asparagine 604, asparagine 607, asparagine 641, and asparagine 660. Asparagine 712 is a glycosylation site (N-linked (GlcNAc...) asparagine). The helical transmembrane segment at 784 to 804 (NLVVWILVPILGVLVILSICA) threads the bilayer. Topologically, residues 805 to 1120 (NTFTYCIRKR…TMLSISTTFS (316 aa)) are cytoplasmic. At threonine 848 the chain carries Phosphothreonine. Positions 851–1120 (FDPTHLIGTG…TMLSISTTFS (270 aa)) constitute a Protein kinase domain. Residues 857-865 (IGTGGYSKV) and lysine 878 contribute to the ATP site. A phosphotyrosine mark is found at tyrosine 929 and tyrosine 968. Residue aspartate 981 is the Proton acceptor of the active site. Residue serine 1014 is modified to Phosphoserine. A phosphotyrosine mark is found at tyrosine 1022 and tyrosine 1029. Residue threonine 1030 is modified to Phosphothreonine.

It belongs to the protein kinase superfamily. Ser/Thr protein kinase family.

The protein localises to the membrane. It carries out the reaction L-seryl-[protein] + ATP = O-phospho-L-seryl-[protein] + ADP + H(+). The enzyme catalyses L-threonyl-[protein] + ATP = O-phospho-L-threonyl-[protein] + ADP + H(+). This is Probable leucine-rich repeat receptor-like protein kinase At1g35710 from Arabidopsis thaliana (Mouse-ear cress).